The sequence spans 486 residues: ATP-dependent rRNA helicase RRP3 (486 aa).

The segment covering methionine 1–histidine 11 has biased composition (basic residues). The disordered stretch occupies residues methionine 1–alanine 52. Residues valine 17–glutamate 49 adopt a coiled-coil conformation. Positions glutamate 21–serine 38 are enriched in basic and acidic residues. The segment covering threonine 41–alanine 52 has biased composition (low complexity). The Q motif motif lies at serine 66–serine 94. The Helicase ATP-binding domain occupies isoleucine 97 to cysteine 269. Position 110 to 117 (alanine 110 to threonine 117) interacts with ATP. A DEAD box motif is present at residues aspartate 216–aspartate 219. Positions leucine 300–valine 446 constitute a Helicase C-terminal domain. Residues arginine 459–glutamate 486 form a disordered region. Positions alanine 476–glutamate 486 are enriched in basic and acidic residues.

Belongs to the DEAD box helicase family. DDX47/RRP3 subfamily. Interacts with the SSU processome.

Its subcellular location is the nucleus. It catalyses the reaction ATP + H2O = ADP + phosphate + H(+). In terms of biological role, ATP-dependent rRNA helicase required for pre-ribosomal RNA processing. Involved in the maturation of the 35S-pre-rRNA and to its cleavage to mature 18S rRNA. This Eremothecium gossypii (strain ATCC 10895 / CBS 109.51 / FGSC 9923 / NRRL Y-1056) (Yeast) protein is ATP-dependent rRNA helicase RRP3.